A 339-amino-acid chain; its full sequence is Ketol-acid reductoisomerase (NADP(+)) (339 aa).

One can recognise a KARI N-terminal Rossmann domain in the interval 1 to 182 (MRVYYDCDVN…GGGRSGIMKT (182 aa)). NADP(+)-binding positions include 24–27 (YGAQ), serine 51, threonine 53, and 83–86 (DELQ). Histidine 108 is a catalytic residue. Glycine 134 is a binding site for NADP(+). The KARI C-terminal knotted domain maps to 183–328 (TFREECETDL…DKIRSMMALT (146 aa)). The Mg(2+) site is built by aspartate 191, glutamate 195, glutamate 227, and glutamate 231. Serine 252 contacts substrate.

It belongs to the ketol-acid reductoisomerase family. Requires Mg(2+) as cofactor.

It catalyses the reaction (2R)-2,3-dihydroxy-3-methylbutanoate + NADP(+) = (2S)-2-acetolactate + NADPH + H(+). It carries out the reaction (2R,3R)-2,3-dihydroxy-3-methylpentanoate + NADP(+) = (S)-2-ethyl-2-hydroxy-3-oxobutanoate + NADPH + H(+). It functions in the pathway amino-acid biosynthesis; L-isoleucine biosynthesis; L-isoleucine from 2-oxobutanoate: step 2/4. It participates in amino-acid biosynthesis; L-valine biosynthesis; L-valine from pyruvate: step 2/4. In terms of biological role, involved in the biosynthesis of branched-chain amino acids (BCAA). Catalyzes an alkyl-migration followed by a ketol-acid reduction of (S)-2-acetolactate (S2AL) to yield (R)-2,3-dihydroxy-isovalerate. In the isomerase reaction, S2AL is rearranged via a Mg-dependent methyl migration to produce 3-hydroxy-3-methyl-2-ketobutyrate (HMKB). In the reductase reaction, this 2-ketoacid undergoes a metal-dependent reduction by NADPH to yield (R)-2,3-dihydroxy-isovalerate. This is Ketol-acid reductoisomerase (NADP(+)) from Bartonella bacilliformis (strain ATCC 35685 / KC583 / Herrer 020/F12,63).